A 104-amino-acid chain; its full sequence is uncharacterized protein (104 aa).

This is an uncharacterized protein from Bacillus subtilis (strain 168).